The sequence spans 1200 residues: Hyalin (1200 aa).

HYR domains follow at residues 1–39 (SSHN…TVTA), 40–123 (TDTT…NVIE), 124–207 (VDTT…NVIE), 208–292 (VDTT…NVIE), 293–376 (VDTT…NVVE), 377–460 (VDTT…NVVE), 461–544 (VDTT…TVEE), 546–629 (VDTT…TVIA), 630–713 (VDTT…TISA), 714–797 (VDTT…VINA), 798–881 (VDTT…TIGT), 882–966 (VDTM…TVFA), 967–1050 (VDTT…TVTA), 1051–1133 (QDTT…TVNT), and 1134–1200 (QDTT…FFSD).

Homooligomer in presence of calcium. In terms of processing, glycosylated.

It localises to the secreted. The protein resides in the extracellular space. The protein localises to the extracellular matrix. Major constituent of the hyaline layer. The hyaline layer of echinoderm embryos is an extraembryonic matrix that functions as a substrate for cell adhesion through early development. The sequence is that of Hyalin from Strongylocentrotus purpuratus (Purple sea urchin).